We begin with the raw amino-acid sequence, 470 residues long: 3-isopropylmalate dehydratase large subunit (470 aa).

Residues cysteine 349, cysteine 410, and cysteine 413 each coordinate [4Fe-4S] cluster.

It belongs to the aconitase/IPM isomerase family. LeuC type 1 subfamily. In terms of assembly, heterodimer of LeuC and LeuD. Requires [4Fe-4S] cluster as cofactor.

The catalysed reaction is (2R,3S)-3-isopropylmalate = (2S)-2-isopropylmalate. It functions in the pathway amino-acid biosynthesis; L-leucine biosynthesis; L-leucine from 3-methyl-2-oxobutanoate: step 2/4. Functionally, catalyzes the isomerization between 2-isopropylmalate and 3-isopropylmalate, via the formation of 2-isopropylmaleate. In Nitrosomonas europaea (strain ATCC 19718 / CIP 103999 / KCTC 2705 / NBRC 14298), this protein is 3-isopropylmalate dehydratase large subunit.